Reading from the N-terminus, the 322-residue chain is tRNA uridine(34) hydroxylase (322 aa).

The Rhodanese domain occupies 125–219 (QDPNTIVIDA…YGKDPEVQGK (95 aa)). Residue Cys179 is the Cysteine persulfide intermediate of the active site.

The protein belongs to the TrhO family.

It catalyses the reaction uridine(34) in tRNA + AH2 + O2 = 5-hydroxyuridine(34) in tRNA + A + H2O. Functionally, catalyzes oxygen-dependent 5-hydroxyuridine (ho5U) modification at position 34 in tRNAs. This chain is tRNA uridine(34) hydroxylase, found in Bacillus subtilis (strain 168).